The sequence spans 116 residues: Large ribosomal subunit protein uL18 (116 aa).

This sequence belongs to the universal ribosomal protein uL18 family. In terms of assembly, part of the 50S ribosomal subunit; part of the 5S rRNA/L5/L18/L25 subcomplex. Contacts the 5S and 23S rRNAs.

This is one of the proteins that bind and probably mediate the attachment of the 5S RNA into the large ribosomal subunit, where it forms part of the central protuberance. This is Large ribosomal subunit protein uL18 from Pseudoalteromonas translucida (strain TAC 125).